The following is a 687-amino-acid chain: Glycine--tRNA ligase beta subunit (687 aa).

The protein belongs to the class-II aminoacyl-tRNA synthetase family. In terms of assembly, tetramer of two alpha and two beta subunits.

It is found in the cytoplasm. The catalysed reaction is tRNA(Gly) + glycine + ATP = glycyl-tRNA(Gly) + AMP + diphosphate. This Neisseria gonorrhoeae (strain NCCP11945) protein is Glycine--tRNA ligase beta subunit.